The sequence spans 208 residues: Uracil phosphoribosyltransferase (208 aa).

Residues R78, R103, and 130-138 each bind 5-phospho-alpha-D-ribose 1-diphosphate; that span reads DPMLATGGS. Residues I193 and 198-200 each bind uracil; that span reads GDA. D199 lines the 5-phospho-alpha-D-ribose 1-diphosphate pocket.

The protein belongs to the UPRTase family. The cofactor is Mg(2+).

It catalyses the reaction UMP + diphosphate = 5-phospho-alpha-D-ribose 1-diphosphate + uracil. Its pathway is pyrimidine metabolism; UMP biosynthesis via salvage pathway; UMP from uracil: step 1/1. Its activity is regulated as follows. Allosterically activated by GTP. Functionally, catalyzes the conversion of uracil and 5-phospho-alpha-D-ribose 1-diphosphate (PRPP) to UMP and diphosphate. This is Uracil phosphoribosyltransferase from Histophilus somni (strain 129Pt) (Haemophilus somnus).